The primary structure comprises 500 residues: Protein DETOXIFICATION 24 (500 aa).

The interval 1–20 is disordered; that stretch reads MSTQEEMEERLLREGSDAEG. A run of 12 helical transmembrane segments spans residues 48-67, 72-92, 124-144, 160-180, 188-208, 225-245, 266-286, 298-318, 342-362, 384-404, 411-431, and 441-461; these read SSLF…AFIG, LGLA…YGLM, IVDM…GPIL, IYPW…IQMY, AIVG…TWWC, VGSW…WCPF, ISSG…VLMA, AFSI…GFLG, VILT…LAFC, VILA…GVAV, IVAV…GLIL, and GLWS…CYII.

This sequence belongs to the multi antimicrobial extrusion (MATE) (TC 2.A.66.1) family.

It localises to the membrane. The protein is Protein DETOXIFICATION 24 of Arabidopsis thaliana (Mouse-ear cress).